A 227-amino-acid polypeptide reads, in one-letter code: DNA repair protein RecO (227 aa).

This sequence belongs to the RecO family.

Involved in DNA repair and RecF pathway recombination. This Pseudomonas entomophila (strain L48) protein is DNA repair protein RecO.